Consider the following 329-residue polypeptide: Prostaglandin reductase 1 (329 aa).

Phosphothreonine is present on Thr-18. NADP(+) contacts are provided by residues 152 to 155 (GAVG), Lys-178, Tyr-193, Asn-217, 239 to 245 (CGAISQY), 270 to 272 (FIV), and Asn-321. Lys-178 bears the N6-(2-hydroxyisobutyryl)lysine; alternate mark. Lys-178 carries the N6-acetyllysine; alternate modification.

It belongs to the NADP-dependent oxidoreductase L4BD family. As to quaternary structure, monomer or homodimer.

It is found in the cytoplasm. The enzyme catalyses 13,14-dihydro-15-oxo-prostaglandin E1 + NADP(+) = 15-oxoprostaglandin E1 + NADPH + H(+). The catalysed reaction is 13,14-dihydro-15-oxo-prostaglandin E2 + NADP(+) = 15-oxoprostaglandin E2 + NADPH + H(+). It catalyses the reaction 13,14-dihydro-15-oxo-prostaglandin F1alpha + NADP(+) = 15-oxoprostaglandin F1alpha + NADPH + H(+). It carries out the reaction 13,14-dihydro-15-oxo-PGF2alpha + NADP(+) = 15-oxoprostaglandin F2alpha + NADPH + H(+). The enzyme catalyses leukotriene B4 + NADP(+) = 12-oxo-leukotriene B4 + NADPH + H(+). The catalysed reaction is 20-hydroxy-leukotriene B4 + NADP(+) = 12-oxo-20-hydroxy-leukotriene B4 + NADPH + H(+). It catalyses the reaction 6-trans-leukotriene B4 + NADP(+) = 12-oxo-(5S)-hydroxy-(6E,8E,10E,14Z)-eicosatetraenoate + NADPH + H(+). It carries out the reaction (5S,12S)-dihydroxy-(6E,10E,12E,14Z)-eicosatetraenoate + NADP(+) = 12-oxo-(5S)-hydroxy-(6E,8E,10E,14Z)-eicosatetraenoate + NADPH + H(+). The enzyme catalyses an n-alkanal + NADP(+) = an alk-2-enal + NADPH + H(+). The catalysed reaction is hexanal + NADP(+) = (E)-hex-2-enal + NADPH + H(+). It catalyses the reaction octanal + NADP(+) = (2E)-octenal + NADPH + H(+). It carries out the reaction decanal + NADP(+) = (2E)-decenal + NADPH + H(+). The enzyme catalyses dodecanal + NADP(+) = (2E)-dodecenal + NADPH + H(+). The catalysed reaction is 4-hydroxynonanal + NADP(+) = (E)-4-hydroxynon-2-enal + NADPH + H(+). It catalyses the reaction pentan-2-one + NADP(+) = (E)-pent-3-en-2-one + NADPH + H(+). It carries out the reaction nonan-2-one + NADP(+) = (3E)-nonen-2-one + NADPH + H(+). Its function is as follows. NAD(P)H-dependent oxidoreductase involved in metabolic inactivation of pro- and anti-inflammatory eicosanoids: prostaglandins (PG), leukotrienes (LT) and lipoxins (LX). Catalyzes with high efficiency the reduction of the 13,14 double bond of 15-oxoPGs, including 15-oxo-PGE1, 15-oxo-PGE2, 15-oxo-PGF1-alpha and 15-oxo-PGF2-alpha. Catalyzes with lower efficiency the oxidation of the hydroxyl group at C12 of LTB4 and its derivatives, converting them into biologically less active 12-oxo-LTB4 metabolites. Reduces 15-oxo-LXA4 to 13,14 dihydro-15-oxo-LXA4, enhancing neutrophil recruitment at the inflammatory site. Plays a role in metabolic detoxification of alkenals and ketones. Reduces alpha,beta-unsaturated alkenals and ketones, particularly those with medium-chain length, showing highest affinity toward (2E)-decenal and (3E)-3-nonen-2-one. May inactivate 4-hydroxy-2-nonenal, a cytotoxic lipid constituent of oxidized low-density lipoprotein particles. This chain is Prostaglandin reductase 1 (Ptgr1), found in Mus musculus (Mouse).